We begin with the raw amino-acid sequence, 182 residues long: ATP synthase subunit delta, mitochondrial (182 aa).

Residues 1–17 (MFRTFGRRLVSCTLPLL) constitute a mitochondrion transit peptide.

Belongs to the ATPase epsilon chain family. As to quaternary structure, F-type ATPases have 2 components, F(1) - the catalytic core - and F(o) - the membrane proton channel. F(1) has five subunits: alpha(3), beta(3), gamma(1), delta(1), epsilon(1), plus the additional subunit P18 (Tb427.05.1710) that is not present in F(1)F(o) ATP synthase from metazoa. Subunit P18 (Tb927.5.1710) interacts with the alpha subunit with a 1:1 stoichiometry; the interaction is direct. Subunit gamma is part of the central stalk. F(o) has three main subunits: a, b and c. The trypanosomal ATPase complex contains additional subunits that are not present in the F(1)F(o) ATP synthase from metazoa.

Its subcellular location is the mitochondrion. It localises to the mitochondrion inner membrane. Its function is as follows. Mitochondrial membrane ATP synthase (F(1)F(o) ATP synthase) produces ATP from ADP in the presence of a proton gradient across the membrane which is generated by electron transport complexes of the respiratory chain. F-type ATPases consist of two structural domains, F(1) - containing the extramembraneous catalytic core, and F(o) - containing the membrane proton channel, linked together by a central stalk and a peripheral stalk. During catalysis, ATP synthesis in the catalytic domain of F(1) is coupled via a rotary mechanism of the central stalk subunits to proton translocation. Subunits alpha and beta form the catalytic core in F(1). Rotation of the central stalk against the surrounding alpha(3)beta(3) subunits leads to hydrolysis of ATP in three separate catalytic sites on the beta subunits. Contrary to the procyclic, insect form that requires F(1)F(o) ATP synthase for ATP synthesis, the bloodstream form relies on ATP hydrolysis by F(1)F(o) ATP synthase to maintain its mitochondrial membrane potential. The protein is ATP synthase subunit delta, mitochondrial of Trypanosoma brucei brucei.